The chain runs to 252 residues: tRNA (guanine-N(1)-)-methyltransferase (252 aa).

Residues Gly-113 and 133-138 (IGDYVL) contribute to the S-adenosyl-L-methionine site.

This sequence belongs to the RNA methyltransferase TrmD family. Homodimer.

Its subcellular location is the cytoplasm. It catalyses the reaction guanosine(37) in tRNA + S-adenosyl-L-methionine = N(1)-methylguanosine(37) in tRNA + S-adenosyl-L-homocysteine + H(+). Its function is as follows. Specifically methylates guanosine-37 in various tRNAs. This Baumannia cicadellinicola subsp. Homalodisca coagulata protein is tRNA (guanine-N(1)-)-methyltransferase.